Here is a 187-residue protein sequence, read N- to C-terminus: MSKFVKTAIAAAMVMGAFTSTATIAAGNNGTARFYGTIEDSVCSIVPDDHKLEVDMGDIGAEKLKNNGTTTPKNFQIRLQDCVFDTQETMTTTFTGTVSSANSGNYYTIFNTDTGAAFNNVSLAIGDSLGTSYKSGMGIDQKIVKDTATNKGKAKQTLNFKAWLVGAADAPDLGNFEANTTFQITYL.

Positions 1–25 are cleaved as a signal peptide; sequence MSKFVKTAIAAAMVMGAFTSTATIA.

Belongs to the fimbrial protein family.

In terms of biological role, part of the yfcOPQRSUV fimbrial operon. Could contribute to adhesion to various surfaces in specific environmental niches. Increases adhesion to eukaryotic T24 bladder epithelial cells in the absence of fim genes. This is an uncharacterized protein from Escherichia coli (strain K12).